Here is a 118-residue protein sequence, read N- to C-terminus: Basic phospholipase A2 PA-12A (118 aa).

Intrachain disulfides connect C11-C71, C27-C117, C29-C45, C44-C98, C51-C91, C60-C84, and C78-C89. Positions 28, 30, and 32 each coordinate Ca(2+). The active site involves H48. Residue D49 participates in Ca(2+) binding. D92 is an active-site residue.

The protein belongs to the phospholipase A2 family. Group I subfamily. D49 sub-subfamily. It depends on Ca(2+) as a cofactor. Expressed by the venom gland.

It is found in the secreted. The enzyme catalyses a 1,2-diacyl-sn-glycero-3-phosphocholine + H2O = a 1-acyl-sn-glycero-3-phosphocholine + a fatty acid + H(+). In terms of biological role, PLA2 catalyzes the calcium-dependent hydrolysis of the 2-acyl groups in 3-sn-phosphoglycerides. In Pseudechis australis (Mulga snake), this protein is Basic phospholipase A2 PA-12A.